Here is a 78-residue protein sequence, read N- to C-terminus: UPF0154 protein SSU98_1719 (78 aa).

Residues 3 to 23 (LGLAILLIVLAFAGGVALGIY) traverse the membrane as a helical segment.

It belongs to the UPF0154 family.

Its subcellular location is the cell membrane. The chain is UPF0154 protein SSU98_1719 from Streptococcus suis (strain 98HAH33).